The sequence spans 328 residues: Isopenicillin N synthase (328 aa).

Positions 85, 89, 181, and 187 each coordinate isopenicillin N. The N-[(5S)-5-amino-5-carboxypentanoyl]-L-cysteinyl-D-valine site is built by Arg85, Tyr89, Ser181, Tyr187, His210, and Asp212. The Fe2OG dioxygenase domain maps to 178-284; it reads TLSSVSLIRY…RLSLPFFFHA (107 aa). Residues His210, Asp212, and His266 each coordinate Fe(2+). Arg275 contributes to the 2-oxoglutarate binding site. An isopenicillin N-binding site is contributed by Ser277. An N-[(5S)-5-amino-5-carboxypentanoyl]-L-cysteinyl-D-valine-binding site is contributed by Ser277.

This sequence belongs to the iron/ascorbate-dependent oxidoreductase family. It depends on Fe cation as a cofactor. The cofactor is L-ascorbate.

The catalysed reaction is N-[(5S)-5-amino-5-carboxypentanoyl]-L-cysteinyl-D-valine + O2 = isopenicillin N + 2 H2O. It functions in the pathway antibiotic biosynthesis; penicillin G biosynthesis; penicillin G from L-alpha-aminoadipate and L-cysteine and L-valine: step 2/3. Its function is as follows. Removes, in the presence of oxygen, 4 hydrogen atoms from delta-L-(alpha-aminoadipyl)-L-cysteinyl-D-valine (ACV) to form the azetidinone and thiazolidine rings of isopenicillin. This chain is Isopenicillin N synthase (pcbC), found in Amycolatopsis lactamdurans (Nocardia lactamdurans).